A 224-amino-acid polypeptide reads, in one-letter code: Response regulator protein GraR (224 aa).

Positions 2-115 (QVLLVEDDQT…VLIAKLQAIY (114 aa)) constitute a Response regulatory domain. The residue at position 51 (Asp-51) is a 4-aspartylphosphate. The ompR/PhoB-type DNA-binding region spans 126-224 (KRTLNWQDAL…KVGKGYMAHE (99 aa)).

Post-translationally, phosphorylated by GraS.

The protein resides in the cytoplasm. Functionally, member of the two-component regulatory system GraR/GraS involved in resistance against cationic antimicrobial peptides (CAMPs). The sequence is that of Response regulator protein GraR (graR) from Staphylococcus haemolyticus (strain JCSC1435).